Here is a 332-residue protein sequence, read N- to C-terminus: MNSTHHHGMHTSLHFWNRSTYGLHSNASEPLGKGYSEGGCYEQLFVSPEVFVTLGVISLLENILVIVAIAKNKNLHSPMYFFICSLAVADMLVSVSNGSETIVITLLNSTDTDAQSFTVNIDNVIDSVICSSLLASICSLLSIAVDRYFTIFYALQYHNIMTVKRVGIIISCIWAVCTVSGVLFIIYSDSSAVIICLITVFFTMLALMASLYVHMFLMARLHIKRIAVLPGTGTIRQGANMKGAITLTILIGVFVVCWAPFFLHLIFYISCPQNPYCVCFMSHFNLYLILIMCNSIIDPLIYALRSQELRKTFKEIICCYPLGGLCDLSSRY.

The Extracellular portion of the chain corresponds to 1–43 (MNSTHHHGMHTSLHFWNRSTYGLHSNASEPLGKGYSEGGCYEQ). Asparagine 2, asparagine 17, and asparagine 26 each carry an N-linked (GlcNAc...) asparagine glycan. Disulfide bonds link cysteine 40/cysteine 279 and cysteine 271/cysteine 277. Residues 44 to 69 (LFVSPEVFVTLGVISLLENILVIVAI) form a helical membrane-spanning segment. Over 70–81 (AKNKNLHSPMYF) the chain is Cytoplasmic. The chain crosses the membrane as a helical span at residues 82-106 (FICSLAVADMLVSVSNGSETIVITL). Residues glutamate 100, aspartate 122, and aspartate 126 each contribute to the Ca(2+) site. Residues 107–123 (LNSTDTDAQSFTVNIDN) lie on the Extracellular side of the membrane. The chain crosses the membrane as a helical span at residues 124-145 (VIDSVICSSLLASICSLLSIAV). Residues 146-165 (DRYFTIFYALQYHNIMTVKR) are Cytoplasmic-facing. Residues 166-186 (VGIIISCIWAVCTVSGVLFII) traverse the membrane as a helical segment. Topologically, residues 187–191 (YSDSS) are extracellular. The chain crosses the membrane as a helical span at residues 192-215 (AVIICLITVFFTMLALMASLYVHM). Residues 216–248 (FLMARLHIKRIAVLPGTGTIRQGANMKGAITLT) are Cytoplasmic-facing. Residues 249 to 271 (ILIGVFVVCWAPFFLHLIFYISC) traverse the membrane as a helical segment. The Extracellular portion of the chain corresponds to 272 to 280 (PQNPYCVCF). Residues 281–304 (MSHFNLYLILIMCNSIIDPLIYAL) form a helical membrane-spanning segment. Residues 305–332 (RSQELRKTFKEIICCYPLGGLCDLSSRY) lie on the Cytoplasmic side of the membrane. Cysteine 318 carries the S-palmitoyl cysteine lipid modification.

It belongs to the G-protein coupled receptor 1 family. Homodimer; disulfide-linked, also forms higher order oligomers. Interacts with GNAS. Interacts with ATRNL1. Interacts with MGRN1; this interaction competes with GNAS-binding and thus inhibits agonist-induced cAMP production. Interacts with MRAP and MRAP2; these associated factors increase ligand-sensitivity and generation of cAMP.

The protein localises to the cell membrane. Its function is as follows. Hormone receptor that acts as a key component of the leptin-melanocortin pathway at the intersection of homeostatic maintenance of energetic state. Plays a role in regulating food intake: activation by a stimulating hormone such as anorexigenic alpha-melanocyte stimulating hormone (alpha-MSH) inhibits appetite, whereas binding to a natural antagonist like Agouti-related protein/AGRP promotes appetite. G-protein-coupled receptor that activates conventional Galphas signaling leading to induction of anorexogenic signaling in the hypothalamus to result in negative energy balance. Regulates the firing activity of neurons from the hypothalamus by alpha-MSH and AGRP independently of Galphas signaling by ligand-induced coupling of closure of inwardly rectifying potassium channel KCNJ13. In intestinal epithelial cells, plays a role in the inhibition of hepatic glucose production via nesfatin-1/NUCB2 leading to increased cyclic adenosine monophosphate (cAMP) levels and glucagon-like peptide 1 (GLP-1) secretion in the intestinal epithelium. This chain is Melanocortin receptor 4 (MC4R), found in Sus scrofa (Pig).